A 198-amino-acid polypeptide reads, in one-letter code: Recombination protein RecR (198 aa).

The segment at 58 to 73 (CLNCGNVGTSDICDIC) adopts a C4-type zinc-finger fold. The region spanning 81 to 175 (GELCVVEDVA…RLTSLAQGVP (95 aa)) is the Toprim domain.

Belongs to the RecR family.

Functionally, may play a role in DNA repair. It seems to be involved in an RecBC-independent recombinational process of DNA repair. It may act with RecF and RecO. The chain is Recombination protein RecR from Ruegeria pomeroyi (strain ATCC 700808 / DSM 15171 / DSS-3) (Silicibacter pomeroyi).